The sequence spans 359 residues: Tricarboxylate transport protein A, mitochondrial (359 aa).

Solcar repeat units follow at residues 71–159, 170–256, and 266–351; these read THPW…LSNP, KASL…LRNW, and MHPL…VVKL. Helical transmembrane passes span 77–97, 171–191, 269–289, and 336–356; these read IFAG…TEYV, ASLL…VCPM, LVTA…NTPL, and LDVA…NNVW.

The protein belongs to the mitochondrial carrier (TC 2.A.29) family. Possesses a short cleavable presequence, which, however, is found to be dispensable both for targeting to mitochondria and insertion into the inner membrane. However, the presequence is required to keep SLC25A1 in a soluble state and thus in an import-competent state. Mature SLC25A1 lacking the presequence is prone to aggregation.

It localises to the mitochondrion inner membrane. It carries out the reaction (S)-malate(in) + citrate(out) = (S)-malate(out) + citrate(in). It catalyses the reaction D-threo-isocitrate(in) + citrate(out) = D-threo-isocitrate(out) + citrate(in). The enzyme catalyses citrate(out) + succinate(in) = citrate(in) + succinate(out). The catalysed reaction is cis-aconitate(in) + citrate(out) = cis-aconitate(out) + citrate(in). It carries out the reaction trans-aconitate(in) + citrate(out) = trans-aconitate(out) + citrate(in). It catalyses the reaction phosphoenolpyruvate(in) + citrate(out) = phosphoenolpyruvate(out) + citrate(in). The enzyme catalyses maleate(in) + citrate(out) = maleate(out) + citrate(in). Mitochondrial electroneutral antiporter that exports citrate from the mitochondria into the cytosol in exchange for malate. Also able to mediate the exchange of citrate for isocitrate, phosphoenolpyruvate, cis-aconitate and to a lesser extent trans-aconitate, maleate and succinate. In the cytoplasm, citrate plays important roles in fatty acid and sterol synthesis, regulation of glycolysis, protein acetylation, and other physiopathological processes. The protein is Tricarboxylate transport protein A, mitochondrial of Danio rerio (Zebrafish).